The chain runs to 254 residues: Alcohol dehydrogenase (254 aa).

10 to 33 (FVAGLGGIGLDTSREIVKSGPKNL) serves as a coordination point for NAD(+). Ser-138 is a substrate binding site. Residue Tyr-151 is the Proton acceptor of the active site.

The protein belongs to the short-chain dehydrogenases/reductases (SDR) family. In terms of assembly, homodimer.

It catalyses the reaction a primary alcohol + NAD(+) = an aldehyde + NADH + H(+). The catalysed reaction is a secondary alcohol + NAD(+) = a ketone + NADH + H(+). In Drosophila picticornis (Fruit fly), this protein is Alcohol dehydrogenase (Adh).